Consider the following 962-residue polypeptide: Glycine dehydrogenase (decarboxylating) (962 aa).

At lysine 709 the chain carries N6-(pyridoxal phosphate)lysine.

Belongs to the GcvP family. As to quaternary structure, the glycine cleavage system is composed of four proteins: P, T, L and H. It depends on pyridoxal 5'-phosphate as a cofactor.

The enzyme catalyses N(6)-[(R)-lipoyl]-L-lysyl-[glycine-cleavage complex H protein] + glycine + H(+) = N(6)-[(R)-S(8)-aminomethyldihydrolipoyl]-L-lysyl-[glycine-cleavage complex H protein] + CO2. In terms of biological role, the glycine cleavage system catalyzes the degradation of glycine. The P protein binds the alpha-amino group of glycine through its pyridoxal phosphate cofactor; CO(2) is released and the remaining methylamine moiety is then transferred to the lipoamide cofactor of the H protein. This Shewanella baltica (strain OS223) protein is Glycine dehydrogenase (decarboxylating).